The primary structure comprises 391 residues: Protein CAJ1 (391 aa).

The 70-residue stretch at 4–73 (ETEYYDILGI…RSKYDQFGKE (70 aa)) folds into the J domain. The tract at residues 119 to 161 (KEDEEGTAATETEKADESTDGGMVKHDTNKAESLKKDKLSKEQ) is disordered. Over residues 129 to 161 (ETEKADESTDGGMVKHDTNKAESLKKDKLSKEQ) the composition is skewed to basic and acidic residues. Residue Lys-132 forms a Glycyl lysine isopeptide (Lys-Gly) (interchain with G-Cter in ubiquitin) linkage.

The sequence is that of Protein CAJ1 (CAJ1) from Saccharomyces cerevisiae (strain ATCC 204508 / S288c) (Baker's yeast).